The following is a 496-amino-acid chain: Cobyric acid synthase (496 aa).

A GATase cobBQ-type domain is found at 250–437 (TLKVIAPALP…LHGLFESPQA (188 aa)). C331 acts as the Nucleophile in catalysis. H429 is an active-site residue.

This sequence belongs to the CobB/CobQ family. CobQ subfamily.

Its pathway is cofactor biosynthesis; adenosylcobalamin biosynthesis. Its function is as follows. Catalyzes amidations at positions B, D, E, and G on adenosylcobyrinic A,C-diamide. NH(2) groups are provided by glutamine, and one molecule of ATP is hydrogenolyzed for each amidation. The polypeptide is Cobyric acid synthase (Hahella chejuensis (strain KCTC 2396)).